Reading from the N-terminus, the 155-residue chain is Small ribosomal subunit protein uS7 (155 aa).

Belongs to the universal ribosomal protein uS7 family. Part of the 30S ribosomal subunit. Contacts proteins S9 and S11.

In terms of biological role, one of the primary rRNA binding proteins, it binds directly to 16S rRNA where it nucleates assembly of the head domain of the 30S subunit. Is located at the subunit interface close to the decoding center, probably blocks exit of the E-site tRNA. The sequence is that of Small ribosomal subunit protein uS7 from Mycoplasma capricolum subsp. capricolum (strain California kid / ATCC 27343 / NCTC 10154).